We begin with the raw amino-acid sequence, 277 residues long: Large ribosomal subunit protein uL2c (277 aa).

Residues 30–60 form a disordered region; the sequence is RKKLTSGQHSGKGRNNRGIITSRHRGGGHKR. Positions 51 to 60 are enriched in basic residues; the sequence is SRHRGGGHKR.

The protein belongs to the universal ribosomal protein uL2 family. Part of the 50S ribosomal subunit.

Its subcellular location is the plastid. It is found in the chloroplast. In Angiopteris evecta (Mule's foot fern), this protein is Large ribosomal subunit protein uL2c (rpl2).